The chain runs to 609 residues: Putative 4-coumarate--CoA ligase-like 8 (609 aa).

ATP contacts are provided by Ser194, Ser195, Gly196, Thr197, Thr198, and Lys202. (E)-4-coumaroyl-AMP contacts are provided by Phe252 and Ser256. Arg274 lines the CoA pocket. The segment at 276 to 348 (SVEKTMAAVE…SCFPAVNLGQ (73 aa)) is SBD1. Residues Gly326, Gln348, Thr353, and Met361 each coordinate (E)-4-coumaroyl-AMP. ATP contacts are provided by Gln348 and Thr353. An SBD2 region spans residues 349 to 450 (CYGLTETTGI…VRGPSTMRGY (102 aa)). Residues Asp482 and Arg497 each contribute to the ATP site. Residues Lys499 and Lys503 each coordinate (E)-4-coumaroyl-AMP. Ala506 is a binding site for CoA. Lys589 contacts ATP.

This sequence belongs to the ATP-dependent AMP-binding enzyme family. Mg(2+) is required as a cofactor.

It carries out the reaction (E)-4-coumarate + ATP + CoA = (E)-4-coumaroyl-CoA + AMP + diphosphate. The enzyme catalyses (E)-4-coumarate + ATP + H(+) = (E)-4-coumaroyl-AMP + diphosphate. The catalysed reaction is (E)-4-coumaroyl-AMP + CoA = (E)-4-coumaroyl-CoA + AMP + H(+). Carboxylate--CoA ligase that may use 4-coumarate as substrate. Follows a two-step reaction mechanism, wherein the carboxylate substrate first undergoes adenylation by ATP, followed by a thioesterification in the presence of CoA to yield the final CoA thioester. This Oryza sativa subsp. japonica (Rice) protein is Putative 4-coumarate--CoA ligase-like 8 (4CLL8).